The primary structure comprises 188 residues: MICTPKVGLNNQLTKVQFFMTKYNFLFKQQVIEFYLQNDKNSSLTRRHFQLAETTLERWINQFNHSGINGLALLGKKRNYSPEFKLNVIQAVKNGKFSAEAACLHFGIANSGVVSQWLQAFEKQGINGLIPKPKGRPTMKLQYPKMPPKPKTREEELELENLRLRAENAILKKLQELNQQKMQKKPLS.

Positions 133-153 (PKGRPTMKLQYPKMPPKPKTR) are disordered.

This sequence belongs to the IS150/IS1296 orfA family.

This is an uncharacterized protein from Haemophilus influenzae (strain ATCC 51907 / DSM 11121 / KW20 / Rd).